A 451-amino-acid polypeptide reads, in one-letter code: Spermidine sinapoyl-CoA acyltransferase (451 aa).

Spermidine-binding residues include tyrosine 47, histidine 169, serine 294, aspartate 316, and leucine 378. The active-site Proton acceptor is histidine 169. Aspartate 391 functions as the Proton acceptor in the catalytic mechanism.

Belongs to the plant acyltransferase family. As to quaternary structure, monomer. In terms of tissue distribution, predominantly expressed in siliques, especially in seeds around the embryo, and, at low levels, in flowers. Barely detectable in stems, leaves, and roots.

The catalysed reaction is 2 (E)-sinapoyl-CoA + spermidine = N(1),N(8)-bis[(E)-sinapoyl]-spermidine + 2 CoA + 2 H(+). It participates in amine and polyamine metabolism; spermidine metabolism. Functionally, spermidine sinapoyl-CoA acyltransferase that mediates the accumulation of disinapoyl spermidine conjugates in seeds. Catalyzes the two conjugating steps required for the biosynthesis of N1,N8-disipanoyl-spermidine. Can also use putrescine as an acyl acceptor to convert it into monosinapoyl-putrescine. The polypeptide is Spermidine sinapoyl-CoA acyltransferase (Arabidopsis thaliana (Mouse-ear cress)).